Reading from the N-terminus, the 452-residue chain is Adenosylmethionine-8-amino-7-oxononanoate aminotransferase (452 aa).

116-117 is a pyridoxal 5'-phosphate binding site; the sequence is GS. Tyr152 contributes to the substrate binding site. Asp257 is a pyridoxal 5'-phosphate binding site. 3 residues coordinate substrate: Lys286, Gly321, and Arg414. Lys286 bears the N6-(pyridoxal phosphate)lysine mark.

The protein belongs to the class-III pyridoxal-phosphate-dependent aminotransferase family. BioA subfamily. As to quaternary structure, homodimer. Requires pyridoxal 5'-phosphate as cofactor.

It localises to the cytoplasm. It catalyses the reaction (8S)-8-amino-7-oxononanoate + S-adenosyl-L-methionine = S-adenosyl-4-methylsulfanyl-2-oxobutanoate + (7R,8S)-7,8-diammoniononanoate. The protein operates within cofactor biosynthesis; biotin biosynthesis; 7,8-diaminononanoate from 8-amino-7-oxononanoate (SAM route): step 1/1. In terms of biological role, catalyzes the transfer of the alpha-amino group from S-adenosyl-L-methionine (SAM) to 7-keto-8-aminopelargonic acid (KAPA) to form 7,8-diaminopelargonic acid (DAPA). It is the only aminotransferase known to utilize SAM as an amino donor. This chain is Adenosylmethionine-8-amino-7-oxononanoate aminotransferase, found in Staphylococcus aureus (strain NCTC 8325 / PS 47).